The following is a 311-amino-acid chain: Glutaminase (311 aa).

S66, N116, E162, N169, Y193, Y245, and V263 together coordinate substrate.

This sequence belongs to the glutaminase family. In terms of assembly, homotetramer.

The catalysed reaction is L-glutamine + H2O = L-glutamate + NH4(+). This is Glutaminase from Rhodopseudomonas palustris (strain HaA2).